The sequence spans 590 residues: Type I inositol polyphosphate 5-phosphatase 1 (590 aa).

The disordered stretch occupies residues 47–73 (DYSADSDDDYEDRSQEFDPISSGVTNP). Over residues 48 to 57 (YSADSDDDYE) the composition is skewed to acidic residues. Phosphoserine is present on Ser-60. Catalytic regions lie at residues 445–460 (ERII…INLS) and 523–538 (GKRR…WNGK).

Belongs to the inositol polyphosphate 5-phosphatase family. In terms of tissue distribution, expressed ubiquitously.

The enzyme catalyses 1D-myo-inositol 1,4,5-trisphosphate + H2O = 1D-myo-inositol 1,4-bisphosphate + phosphate. It carries out the reaction 1D-myo-inositol 1,3,4,5-tetrakisphosphate + H2O = 1D-myo-inositol 1,3,4-trisphosphate + phosphate. Functionally, has phosphatase activity toward Ins(1,4,5)P3 and Ins(1,3,4,5)P4, but not toward Ins(1,4)P2, Ins(1)P. Seems to be involved in the abscisic acid (ABA) signaling pathway. Could also be able to hydrolyze PtdIns(4,5)P2 and PtdIns(3,4,5)P3. This is Type I inositol polyphosphate 5-phosphatase 1 from Arabidopsis thaliana (Mouse-ear cress).